The following is an 8515-amino-acid chain: Nonribosomal peptide synthetase 8 (8515 aa).

Adenylation stretches follow at residues 59 to 736 (REHH…YRCS) and 1163 to 1705 (AKLS…EWVE). Residues 587–1159 (RRVVQWLENL…TVGEVALVGD (573 aa)) are condensation 1. Residues 615–691 (EPETAMERRL…ELAPRVKVAE (77 aa)) enclose the Carrier 1 domain. Position 652 is an O-(pantetheine 4'-phosphoryl)serine (Ser652). The region spanning 1732 to 1808 (RGLTPTETVI…KLGRHADHSS (77 aa)) is the Carrier 2 domain. Ser1769 is subject to O-(pantetheine 4'-phosphoryl)serine. Residues 1830–2273 (LSPIQQWFFE…TLYDCPLAAL (444 aa)) are epimerase 1. A condensation 2 region spans residues 2301–2709 (SHIQEGILLS…RSPEAVLHDL (409 aa)). The segment at 2733–3266 (QCLHWLIEQW…RMILSWLSEP (534 aa)) is adenylation 3. The region spanning 3286–3362 (TTLGPVEKQM…KVTPRTISLS (77 aa)) is the Carrier 3 domain. Ser3323 is modified (O-(pantetheine 4'-phosphoryl)serine). The interval 3406–3819 (SPMQEGILLA…DNSGCSVKTV (414 aa)) is condensation 3. Residues 3857–3933 (EPTNLIALTV…EVFEHARFSD (77 aa)) form the Carrier 4 domain. Position 3894 is an O-(pantetheine 4'-phosphoryl)serine (Ser3894). The tract at residues 3953-4392 (LSPIQKLHFH…TPSDFQLLSL (440 aa)) is epimerase 2. The condensation 4 stretch occupies residues 4420-4823 (PCSPMQEGIL…ARPRARLGTI (404 aa)). An adenylation 4 region spans residues 4837–5363 (WNEQARRPVV…RKVNKWLESF (527 aa)). The region spanning 5385–5461 (PPLTPIQQTI…SLAACATAII (77 aa)) is the Carrier 5 domain. Position 5422 is an O-(pantetheine 4'-phosphoryl)serine (Ser5422). The condensation 5 stretch occupies residues 5508-5923 (SPMQEGILFS…SLVDHLSLCS (416 aa)). The tract at residues 5941–6459 (ELRQCLHELI…GKVDRQALRR (519 aa)) is adenylation 5. Residues 6482–6558 (PISTAEEQQM…DLATLLESPA (77 aa)) enclose the Carrier 6 domain. Ser6519 is modified (O-(pantetheine 4'-phosphoryl)serine). Positions 6606-6992 (CTPLQESLMA…SQMKSVMGTL (387 aa)) are condensation 6. An adenylation 6 region spans residues 7030 to 7544 (VEDLIISRAQ…SSGKLARKGV (515 aa)). The Carrier 7 domain occupies 7575-7651 (IASSSVERAI…HLASREDLTA (77 aa)). Ser7612 bears the O-(pantetheine 4'-phosphoryl)serine mark. The tract at residues 7670 to 8119 (LTPIQRFFFC…DYPRARLDYT (450 aa)) is epimerase 3. The interval 8164-8504 (HFIWKIAGTK…DPTSPLQFAD (341 aa)) is condensation 7. Residues 8488 to 8500 (AVNSVSSDPTSPL) show a composition bias toward polar residues. The disordered stretch occupies residues 8488–8515 (AVNSVSSDPTSPLQFADGQDPMPVSHQP).

The protein belongs to the NRP synthetase family.

In terms of biological role, nonribosomal peptide synthesis (NRPS) is a key mechanism responsible for the biosynthesis of bioactive metabolites which are potentially contributing to organismal virulence. However, contarary to other nonribosomal peptide synthases, NRPS8 does not encode a secreted peptide, but has more a structural role since it is involved in germ tube formation. The chain is Nonribosomal peptide synthetase 8 (NRPS8) from Aspergillus fumigatus (strain ATCC MYA-4609 / CBS 101355 / FGSC A1100 / Af293) (Neosartorya fumigata).